The chain runs to 265 residues: Hydroxyethylthiazole kinase (265 aa).

Substrate is bound at residue M50. ATP is bound by residues R125 and T171. G198 contributes to the substrate binding site.

It belongs to the Thz kinase family. Mg(2+) serves as cofactor.

The enzyme catalyses 5-(2-hydroxyethyl)-4-methylthiazole + ATP = 4-methyl-5-(2-phosphooxyethyl)-thiazole + ADP + H(+). It participates in cofactor biosynthesis; thiamine diphosphate biosynthesis; 4-methyl-5-(2-phosphoethyl)-thiazole from 5-(2-hydroxyethyl)-4-methylthiazole: step 1/1. In terms of biological role, catalyzes the phosphorylation of the hydroxyl group of 4-methyl-5-beta-hydroxyethylthiazole (THZ). The sequence is that of Hydroxyethylthiazole kinase from Salmonella paratyphi B (strain ATCC BAA-1250 / SPB7).